Here is a 141-residue protein sequence, read N- to C-terminus: MAKKVVAEVKLQLPAGKATPAPPVGPALGQRGVNIMEFCKRFNAETADKAGMILPVIITVYEDRSFSFVVKTPPASFLLKRAAGLEKGSGEPKRKNVGKVTRKQLEEIAKIKMPDITANDLEAAVKIVEGTAKSMGIEIVD.

Belongs to the universal ribosomal protein uL11 family. As to quaternary structure, part of the ribosomal stalk of the 50S ribosomal subunit. Interacts with L10 and the large rRNA to form the base of the stalk. L10 forms an elongated spine to which L12 dimers bind in a sequential fashion forming a multimeric L10(L12)X complex. One or more lysine residues are methylated.

Functionally, forms part of the ribosomal stalk which helps the ribosome interact with GTP-bound translation factors. The polypeptide is Large ribosomal subunit protein uL11 (Pseudothermotoga lettingae (strain ATCC BAA-301 / DSM 14385 / NBRC 107922 / TMO) (Thermotoga lettingae)).